The sequence spans 297 residues: GTPase Era (297 aa).

Positions 3 to 171 (KSGFVSIVGR…IKVIQNYLEE (169 aa)) constitute an Era-type G domain. The interval 11 to 18 (GRPNVGKS) is G1. 11 to 18 (GRPNVGKS) lines the GTP pocket. The tract at residues 37-41 (QTTRN) is G2. The segment at 58 to 61 (DTPG) is G3. Residues 58–62 (DTPGI) and 120–123 (NKID) each bind GTP. Residues 120 to 123 (NKID) form a G4 region. A G5 region spans residues 150–152 (ISA). Residues 194–280 (IREKVLHYLN…NLQLWVKVKE (87 aa)) form the KH type-2 domain.

This sequence belongs to the TRAFAC class TrmE-Era-EngA-EngB-Septin-like GTPase superfamily. Era GTPase family. As to quaternary structure, monomer.

The protein resides in the cytoplasm. The protein localises to the cell membrane. In terms of biological role, an essential GTPase that binds both GDP and GTP, with rapid nucleotide exchange. Plays a role in 16S rRNA processing and 30S ribosomal subunit biogenesis and possibly also in cell cycle regulation and energy metabolism. The sequence is that of GTPase Era from Clostridioides difficile (strain 630) (Peptoclostridium difficile).